A 171-amino-acid polypeptide reads, in one-letter code: Co-chaperone protein HscB homolog (171 aa).

Residues 2–74 (NHFELFGLPN…VTRAEYILSE (73 aa)) form the J domain.

It belongs to the HscB family. As to quaternary structure, interacts with HscA and stimulates its ATPase activity.

Co-chaperone involved in the maturation of iron-sulfur cluster-containing proteins. Seems to help targeting proteins to be folded toward HscA. This Aliivibrio salmonicida (strain LFI1238) (Vibrio salmonicida (strain LFI1238)) protein is Co-chaperone protein HscB homolog.